A 160-amino-acid chain; its full sequence is MAGVLRSAFPRPPCRLQTVKKGAESLIGTEWIRHKFTKSRIPDKVFQPKPEDHEKYGGDPQNPHKLHIVTRIRSTKRRPYWEKDTIKMLGLQKAHSPQIHKNIPSVNAKLKVVKHLIRIQPLKLPQGLPTEETMSSTCLKSTGELVVQWHLKPVEQEAKS.

The transit peptide at 1-34 (MAGVLRSAFPRPPCRLQTVKKGAESLIGTEWIRH) directs the protein to the mitochondrion. Positions 44–64 (KVFQPKPEDHEKYGGDPQNPH) are disordered.

The protein belongs to the universal ribosomal protein uL30 family. In terms of assembly, component of the mitochondrial ribosome large subunit (39S) which comprises a 16S rRNA and about 50 distinct proteins.

It localises to the mitochondrion. The sequence is that of Large ribosomal subunit protein uL30m (Mrpl30) from Mus musculus (Mouse).